We begin with the raw amino-acid sequence, 63 residues long: Cecropin (63 aa).

The N-terminal stretch at 1 to 23 (MNFYKIFVFIALILALSVSQSEA) is a signal peptide. Residue Arg62 is modified to Arginine amide.

As to quaternary structure, monomer. Hemolymph.

The protein localises to the secreted. Its function is as follows. Cecropins have lytic and antibacterial activity against several Gram-negative bacteria. The sequence is that of Cecropin from Glossina morsitans morsitans (Savannah tsetse fly).